The sequence spans 707 residues: Ribosomal RNA large subunit methyltransferase K/L (707 aa).

Positions 44–155 (VIYNLCLWSR…NDILTVSFDL (112 aa)) constitute a THUMP domain.

This sequence belongs to the methyltransferase superfamily. RlmKL family.

Its subcellular location is the cytoplasm. The enzyme catalyses guanosine(2445) in 23S rRNA + S-adenosyl-L-methionine = N(2)-methylguanosine(2445) in 23S rRNA + S-adenosyl-L-homocysteine + H(+). It catalyses the reaction guanosine(2069) in 23S rRNA + S-adenosyl-L-methionine = N(2)-methylguanosine(2069) in 23S rRNA + S-adenosyl-L-homocysteine + H(+). In terms of biological role, specifically methylates the guanine in position 2445 (m2G2445) and the guanine in position 2069 (m7G2069) of 23S rRNA. The chain is Ribosomal RNA large subunit methyltransferase K/L from Legionella pneumophila subsp. pneumophila (strain Philadelphia 1 / ATCC 33152 / DSM 7513).